The chain runs to 192 residues: Transmembrane protein 276 (192 aa).

The N-terminal stretch at 1-32 (MVSKPRNEWSTALSHLVLAGVSLHAAVSSVQS) is a signal peptide. 4 helical membrane-spanning segments follow: residues 35–55 (GAAAGFLLQTLAAVIMLAPEL), 63–83 (AGAWVATVIGLPLLAFDFHWV), 92–112 (LLLGGGMVLAVAGDHLGPEGC), and 114–134 (VAGQAVLLVVAVTILIVAVFT).

It is found in the membrane. This is Transmembrane protein 276 from Rattus norvegicus (Rat).